Here is a 398-residue protein sequence, read N- to C-terminus: Acetate kinase (398 aa).

Mg(2+) is bound at residue Asn-8. Lys-15 contacts ATP. Arg-89 is a substrate binding site. The Proton donor/acceptor role is filled by Asp-146. ATP contacts are provided by residues 206–210 (HIGNG), 281–283 (DLR), and 329–333 (GVGEN). Mg(2+) is bound at residue Glu-383.

Belongs to the acetokinase family. Homodimer. It depends on Mg(2+) as a cofactor. The cofactor is Mn(2+).

Its subcellular location is the cytoplasm. The enzyme catalyses acetate + ATP = acetyl phosphate + ADP. The protein operates within metabolic intermediate biosynthesis; acetyl-CoA biosynthesis; acetyl-CoA from acetate: step 1/2. Catalyzes the formation of acetyl phosphate from acetate and ATP. Can also catalyze the reverse reaction. The chain is Acetate kinase from Macrococcus caseolyticus (strain JCSC5402) (Macrococcoides caseolyticum).